The sequence spans 403 residues: Phosphopentomutase (403 aa).

6 residues coordinate Mn(2+): Asp13, Asp298, His303, Asp339, His340, and His351.

It belongs to the phosphopentomutase family. The cofactor is Mn(2+).

The protein resides in the cytoplasm. It catalyses the reaction 2-deoxy-alpha-D-ribose 1-phosphate = 2-deoxy-D-ribose 5-phosphate. The catalysed reaction is alpha-D-ribose 1-phosphate = D-ribose 5-phosphate. It participates in carbohydrate degradation; 2-deoxy-D-ribose 1-phosphate degradation; D-glyceraldehyde 3-phosphate and acetaldehyde from 2-deoxy-alpha-D-ribose 1-phosphate: step 1/2. In terms of biological role, isomerase that catalyzes the conversion of deoxy-ribose 1-phosphate (dRib-1-P) and ribose 1-phosphate (Rib-1-P) to deoxy-ribose 5-phosphate (dRib-5-P) and ribose 5-phosphate (Rib-5-P), respectively. The sequence is that of Phosphopentomutase from Streptococcus equi subsp. zooepidemicus (strain H70).